We begin with the raw amino-acid sequence, 438 residues long: Exoglucanase 3 (438 aa).

The first 20 residues, 1 to 20 (MFKFAALLALASLVPGFVQA), serve as a signal peptide directing secretion. The 39-residue stretch at 21–59 (QSPVWGQCGGNGWTGPTTCASGSTCVKQNDFYSQCLPNN) folds into the CBM1 domain. Cystine bridges form between cysteine 28/cysteine 45 and cysteine 39/cysteine 55. The disordered stretch occupies residues 57–90 (PNNQAPPSTTTQPGTTPPATTTSGGTGPTSGAGN). Residues 60–87 (QAPPSTTTQPGTTPPATTTSGGTGPTSG) are linker. A compositionally biased stretch (low complexity) spans 61–79 (APPSTTTQPGTTPPATTTS). The segment at 88-438 (AGNPYTGKTV…TLVANANPAL (351 aa)) is catalytic. Cystine bridges form between cysteine 170–cysteine 229 and cysteine 360–cysteine 407. Catalysis depends on aspartate 215, which acts as the Proton donor. Aspartate 393 serves as the catalytic Nucleophile.

It belongs to the glycosyl hydrolase 6 (cellulase B) family.

It carries out the reaction Hydrolysis of (1-&gt;4)-beta-D-glucosidic linkages in cellulose and cellotetraose, releasing cellobiose from the non-reducing ends of the chains.. Functionally, shows enzymatic activity towards crystalline cellulose. At long reaction times. It is also able to degrade carboxymethyl cellulose and barley B-glucan. The protein is Exoglucanase 3 (cel3) of Agaricus bisporus (White button mushroom).